A 155-amino-acid chain; its full sequence is SsrA-binding protein (155 aa).

It belongs to the SmpB family.

It is found in the cytoplasm. Functionally, required for rescue of stalled ribosomes mediated by trans-translation. Binds to transfer-messenger RNA (tmRNA), required for stable association of tmRNA with ribosomes. tmRNA and SmpB together mimic tRNA shape, replacing the anticodon stem-loop with SmpB. tmRNA is encoded by the ssrA gene; the 2 termini fold to resemble tRNA(Ala) and it encodes a 'tag peptide', a short internal open reading frame. During trans-translation Ala-aminoacylated tmRNA acts like a tRNA, entering the A-site of stalled ribosomes, displacing the stalled mRNA. The ribosome then switches to translate the ORF on the tmRNA; the nascent peptide is terminated with the 'tag peptide' encoded by the tmRNA and targeted for degradation. The ribosome is freed to recommence translation, which seems to be the essential function of trans-translation. The sequence is that of SsrA-binding protein from Streptococcus pneumoniae serotype 4 (strain ATCC BAA-334 / TIGR4).